Consider the following 60-residue polypeptide: Putative transmembrane protein 74 (60 aa).

2 helical membrane passes run Phe4–Phe24 and Trp35–Gly55.

It is found in the host membrane. The protein is Putative transmembrane protein 74 (SIFV0074) of Sulfolobus islandicus filamentous virus (isolate Iceland/Hveragerdi) (SIFV).